Here is a 741-residue protein sequence, read N- to C-terminus: Phosphoribosylformylglycinamidine synthase subunit PurL (741 aa).

H54 is an active-site residue. Residues Y57 and K96 each contribute to the ATP site. Residue E98 participates in Mg(2+) binding. Residues S99–H102 and R121 contribute to the substrate site. The active-site Proton acceptor is the H100. D122 is a binding site for Mg(2+). A substrate-binding site is contributed by Q245. Residue D273 participates in Mg(2+) binding. E317–Q319 provides a ligand contact to substrate. Residues D500 and G537 each contribute to the ATP site. A Mg(2+)-binding site is contributed by N538. Residue S540 coordinates substrate.

This sequence belongs to the FGAMS family. As to quaternary structure, monomer. Part of the FGAM synthase complex composed of 1 PurL, 1 PurQ and 2 PurS subunits.

It localises to the cytoplasm. The enzyme catalyses N(2)-formyl-N(1)-(5-phospho-beta-D-ribosyl)glycinamide + L-glutamine + ATP + H2O = 2-formamido-N(1)-(5-O-phospho-beta-D-ribosyl)acetamidine + L-glutamate + ADP + phosphate + H(+). The protein operates within purine metabolism; IMP biosynthesis via de novo pathway; 5-amino-1-(5-phospho-D-ribosyl)imidazole from N(2)-formyl-N(1)-(5-phospho-D-ribosyl)glycinamide: step 1/2. Functionally, part of the phosphoribosylformylglycinamidine synthase complex involved in the purines biosynthetic pathway. Catalyzes the ATP-dependent conversion of formylglycinamide ribonucleotide (FGAR) and glutamine to yield formylglycinamidine ribonucleotide (FGAM) and glutamate. The FGAM synthase complex is composed of three subunits. PurQ produces an ammonia molecule by converting glutamine to glutamate. PurL transfers the ammonia molecule to FGAR to form FGAM in an ATP-dependent manner. PurS interacts with PurQ and PurL and is thought to assist in the transfer of the ammonia molecule from PurQ to PurL. The chain is Phosphoribosylformylglycinamidine synthase subunit PurL from Shouchella clausii (strain KSM-K16) (Alkalihalobacillus clausii).